The following is a 37-amino-acid chain: Large ribosomal subunit protein bL36 (37 aa).

This sequence belongs to the bacterial ribosomal protein bL36 family.

The protein is Large ribosomal subunit protein bL36 of Metamycoplasma arthritidis (strain 158L3-1) (Mycoplasma arthritidis).